We begin with the raw amino-acid sequence, 146 residues long: Tol-Pal system protein TolR (146 aa).

A helical transmembrane segment spans residues V16–M36.

It belongs to the ExbD/TolR family. In terms of assembly, the Tol-Pal system is composed of five core proteins: the inner membrane proteins TolA, TolQ and TolR, the periplasmic protein TolB and the outer membrane protein Pal. They form a network linking the inner and outer membranes and the peptidoglycan layer.

It localises to the cell inner membrane. In terms of biological role, part of the Tol-Pal system, which plays a role in outer membrane invagination during cell division and is important for maintaining outer membrane integrity. The sequence is that of Tol-Pal system protein TolR from Pseudomonas aeruginosa (strain ATCC 15692 / DSM 22644 / CIP 104116 / JCM 14847 / LMG 12228 / 1C / PRS 101 / PAO1).